The following is a 270-amino-acid chain: A-type potassium channel modulatory protein KCNIP2 (270 aa).

A compositionally biased stretch (basic and acidic residues) spans methionine 1–aspartate 17. The segment at methionine 1–alanine 34 is disordered. At serine 9 the chain carries Phosphoserine. Residues cysteine 45 and cysteine 46 are each lipidated (S-palmitoyl cysteine). Residues phenylalanine 81 to proline 137 enclose the EF-hand 1; degenerate domain. EF-hand domains lie at aspartate 140 to glycine 175, threonine 176 to methionine 211, and alanine 224 to isoleucine 259. The Ca(2+) site is built by aspartate 153, asparagine 155, aspartate 157, serine 159, aspartate 164, aspartate 189, asparagine 191, aspartate 193, cysteine 195, glutamate 200, aspartate 237, asparagine 239, aspartate 241, and glutamate 248. The interval glutamate 257–isoleucine 270 is interaction with KCND2.

This sequence belongs to the recoverin family. Component of heteromultimeric potassium channels. Identified in potassium channel complexes containing KCND1, KCND2, KCND3, KCNIP1, KCNIP2, KCNIP3, KCNIP4, DPP6 and DPP10. The KCND2-KCNIP2 channel complex contains four KCND2 and four KCNIP2 subunits. Interacts with KCND2. Probably part of a complex consisting of KCNIP1, KCNIP2 isoform 3 and KCND2. At least isoform 2 and isoform 3 can self-associate to form homodimers and homotetramers. Isoform 3 interacts with KCNIP1 in a calcium-dependent manner. Interacts with KCND3; each KCNIP2 monomer interacts with two adjacent KCND3 subunits, through both the N-terminal inactivation ball of a KCND3 subunit and a C-terminal helix from the adjacent KCND3 subunit, clamping them together; this interaction modulates the channel gating kinetics. In terms of processing, palmitoylated. Palmitoylation enhances association with the plasma membrane. As to expression, expressed in heart, brain and lung. In brain, abundantly expressed in striatum, hippocampus and olfactory bulb, moderately expressed in cerebral cortex and lowly expressed in thalamus and hypothalamus. Isoform 1 is predominant in cerebral cortex, striatum and hippocampus. Isoform 1, isoform 2 and isoform 3 are equally expressed in olfactory bulb. Iisoform 3 is expressed at high levels and isoform 1 at low levels in heart (in PubMed:11263977).

It localises to the cell membrane. Its function is as follows. Regulatory subunit of Kv4/D (Shal)-type voltage-gated rapidly inactivating A-type potassium channels. Modulates channel density, inactivation kinetics and rate of recovery from inactivation in a calcium-dependent and isoform-specific manner. Involved in KCND2 and KCND3 trafficking to the cell surface. Essential for the expression of I(To) currents in the heart. Required for normal protein levels of KCND2 in the heart ventricle. This is A-type potassium channel modulatory protein KCNIP2 from Rattus norvegicus (Rat).